The chain runs to 304 residues: Recombination-associated protein RdgC (304 aa).

This sequence belongs to the RdgC family.

The protein localises to the cytoplasm. Its subcellular location is the nucleoid. In terms of biological role, may be involved in recombination. This is Recombination-associated protein RdgC from Shewanella sp. (strain MR-4).